A 355-amino-acid chain; its full sequence is Undecaprenyl-phosphate alpha-N-acetylglucosaminyl 1-phosphate transferase (355 aa).

Transmembrane regions (helical) follow at residues 1-21 (MLSI…MRPL), 39-59 (GTIP…YYLM), 63-83 (QLRL…IGIL), 123-143 (FQLT…IAII), 182-202 (WSFA…GIPF), 208-228 (VFMG…ILLL), 237-257 (MNPV…VAII), and 315-335 (WAMF…ITHA).

Belongs to the glycosyltransferase 4 family. WecA subfamily. It depends on Mg(2+) as a cofactor. Mn(2+) serves as cofactor.

It is found in the cell inner membrane. It catalyses the reaction di-trans,octa-cis-undecaprenyl phosphate + UDP-N-acetyl-alpha-D-glucosamine = N-acetyl-alpha-D-glucosaminyl-di-trans,octa-cis-undecaprenyl diphosphate + UMP. It functions in the pathway bacterial outer membrane biogenesis; LPS O-antigen biosynthesis. In terms of biological role, catalyzes the transfer of the GlcNAc-1-phosphate moiety from UDP-GlcNAc onto the carrier lipid undecaprenyl phosphate (C55-P), yielding GlcNAc-pyrophosphoryl-undecaprenyl (GlcNAc-PP-C55). The protein is Undecaprenyl-phosphate alpha-N-acetylglucosaminyl 1-phosphate transferase of Haemophilus influenzae (strain ATCC 51907 / DSM 11121 / KW20 / Rd).